The primary structure comprises 322 residues: GTP 3',8-cyclase (322 aa).

The region spanning 5–217 (SYGRVVDYLR…DIISKKYNIK (213 aa)) is the Radical SAM core domain. R14 provides a ligand contact to GTP. 2 residues coordinate [4Fe-4S] cluster: C21 and C25. An S-adenosyl-L-methionine-binding site is contributed by Y27. Position 28 (C28) interacts with [4Fe-4S] cluster. R64 lines the GTP pocket. G68 provides a ligand contact to S-adenosyl-L-methionine. T95 provides a ligand contact to GTP. S119 is an S-adenosyl-L-methionine binding site. K155 serves as a coordination point for GTP. An S-adenosyl-L-methionine-binding site is contributed by M189. [4Fe-4S] cluster is bound by residues C249 and C252. 254–256 (RLR) lines the GTP pocket. Position 266 (C266) interacts with [4Fe-4S] cluster.

Belongs to the radical SAM superfamily. MoaA family. As to quaternary structure, monomer and homodimer. [4Fe-4S] cluster serves as cofactor.

It catalyses the reaction GTP + AH2 + S-adenosyl-L-methionine = (8S)-3',8-cyclo-7,8-dihydroguanosine 5'-triphosphate + 5'-deoxyadenosine + L-methionine + A + H(+). The protein operates within cofactor biosynthesis; molybdopterin biosynthesis. In terms of biological role, catalyzes the cyclization of GTP to (8S)-3',8-cyclo-7,8-dihydroguanosine 5'-triphosphate. The sequence is that of GTP 3',8-cyclase from Campylobacter fetus subsp. fetus (strain 82-40).